The sequence spans 98 residues: uncharacterized protein (98 aa).

It localises to the cytoplasm. This is an uncharacterized protein from Saccharomyces cerevisiae (strain ATCC 204508 / S288c) (Baker's yeast).